The chain runs to 230 residues: Protein STK_02290 (230 aa).

The region spanning 15–213 (NLGKVLIKIA…EEKPKSEKIL (199 aa)) is the AMMECR1 domain.

The protein is Protein STK_02290 of Sulfurisphaera tokodaii (strain DSM 16993 / JCM 10545 / NBRC 100140 / 7) (Sulfolobus tokodaii).